Here is a 109-residue protein sequence, read N- to C-terminus: T cell receptor alpha variable 26-2 (109 aa).

The first 19 residues, 1–19 (MKLVTSITVLLSLGIMGDA), serve as a signal peptide directing secretion. An Ig-like domain is found at 20–109 (KTTQPNSMES…AAVYYCILRD (90 aa)). Cysteines 39 and 105 form a disulfide. N-linked (GlcNAc...) asparagine glycosylation is present at Asn-40.

As to quaternary structure, alpha-beta TR is a heterodimer composed of an alpha and beta chain; disulfide-linked. The alpha-beta TR is associated with the transmembrane signaling CD3 coreceptor proteins to form the TR-CD3 (TcR or TCR). The assembly of alpha-beta TR heterodimers with CD3 occurs in the endoplasmic reticulum where a single alpha-beta TR heterodimer associates with one CD3D-CD3E heterodimer, one CD3G-CD3E heterodimer and one CD247 homodimer forming a stable octameric structure. CD3D-CD3E and CD3G-CD3E heterodimers preferentially associate with TR alpha and TR beta chains, respectively. The association of the CD247 homodimer is the last step of TcR assembly in the endoplasmic reticulum and is required for transport to the cell surface.

It is found in the cell membrane. Its function is as follows. V region of the variable domain of T cell receptor (TR) alpha chain that participates in the antigen recognition. Alpha-beta T cell receptors are antigen specific receptors which are essential to the immune response and are present on the cell surface of T lymphocytes. Recognize peptide-major histocompatibility (MH) (pMH) complexes that are displayed by antigen presenting cells (APC), a prerequisite for efficient T cell adaptive immunity against pathogens. Binding of alpha-beta TR to pMH complex initiates TR-CD3 clustering on the cell surface and intracellular activation of LCK that phosphorylates the ITAM motifs of CD3G, CD3D, CD3E and CD247 enabling the recruitment of ZAP70. In turn ZAP70 phosphorylates LAT, which recruits numerous signaling molecules to form the LAT signalosome. The LAT signalosome propagates signal branching to three major signaling pathways, the calcium, the mitogen-activated protein kinase (MAPK) kinase and the nuclear factor NF-kappa-B (NF-kB) pathways, leading to the mobilization of transcription factors that are critical for gene expression and essential for T cell growth and differentiation. The T cell repertoire is generated in the thymus, by V-(D)-J rearrangement. This repertoire is then shaped by intrathymic selection events to generate a peripheral T cell pool of self-MH restricted, non-autoaggressive T cells. Post-thymic interaction of alpha-beta TR with the pMH complexes shapes TR structural and functional avidity. In Homo sapiens (Human), this protein is T cell receptor alpha variable 26-2.